The following is a 122-amino-acid chain: Large ribosomal subunit protein bL12 (122 aa).

Belongs to the bacterial ribosomal protein bL12 family. In terms of assembly, homodimer. Part of the ribosomal stalk of the 50S ribosomal subunit. Forms a multimeric L10(L12)X complex, where L10 forms an elongated spine to which 2 to 4 L12 dimers bind in a sequential fashion. Binds GTP-bound translation factors.

Its function is as follows. Forms part of the ribosomal stalk which helps the ribosome interact with GTP-bound translation factors. Is thus essential for accurate translation. This chain is Large ribosomal subunit protein bL12, found in Streptococcus sanguinis (strain SK36).